Here is a 974-residue protein sequence, read N- to C-terminus: Receptor-like protein 7 (974 aa).

A signal peptide spans 1 to 24 (MSFLIRSICFLILIPSFLITFVSA). Residues 25–930 (TQHLCHSDQK…EEEEEESFSW (906 aa)) lie on the Extracellular side of the membrane. N-linked (GlcNAc...) asparagine glycosylation is found at Asn-54 and Asn-90. LRR repeat units lie at residues 96 to 120 (LRHL…EFDK), 122 to 145 (TGLE…LLQL), 147 to 166 (KLVS…SFHY), 181 to 204 (LRNL…EFSN), 206 to 229 (RSLR…ILLI), and 230 to 252 (PNLQ…VFHE). A glycan (N-linked (GlcNAc...) asparagine) is linked at Asn-253. LRR repeat units follow at residues 254-277 (NSLL…ISSL), 278-301 (KNLT…LGNL), 302-325 (SHLS…IGNL), 327-349 (QLTN…LSNL), and 350-373 (TKLN…ISQL). 2 N-linked (GlcNAc...) asparagine glycosylation sites follow: Asn-279 and Asn-300. Asn-348 carries N-linked (GlcNAc...) asparagine glycosylation. Residues 374–396 (SKLKFFFADDNPFIGAILSPLLK) form an LRR 12; degenerate repeat. LRR repeat units follow at residues 397–422 (IPSL…IFML), 425–448 (LETF…VFSS), 454–472 (TLYI…SDFP), 473–495 (SNLE…IRKG), 496–519 (RNLQ…LWRM), 521–542 (TLNS…VKAS), 544–570 (ESQL…SLRY), 572–589 (SGSN…ICGL), 590–616 (SSLE…LMSS), 618–638 (SDLD…FMNA), 639–662 (TKLR…LTGC), 664–685 (SLEV…ELNS), 687–712 (QKLQ…VWFG), 713–737 (FPQL…YFMN), 785–809 (LTIY…IGLL), 810–833 (KELR…LANL), 834–857 (KNLE…LGTL), and 859–882 (SLAW…QFQR). N-linked (GlcNAc...) asparagine glycosylation is found at Asn-434, Asn-466, and Asn-484. Asn-529 is a glycosylation site (N-linked (GlcNAc...) asparagine). 4 N-linked (GlcNAc...) asparagine glycosylation sites follow: Asn-577, Asn-603, Asn-624, and Asn-637. Residue Asn-737 is glycosylated (N-linked (GlcNAc...) asparagine). Residues Asn-816, Asn-845, and Asn-864 are each glycosylated (N-linked (GlcNAc...) asparagine). Positions 899–923 (LENVCGHIKESTPTQTEPLETKEEE) are disordered. Residues 931-951 (IAAGLGFAPGVVFGLAMGYIV) traverse the membrane as a helical segment. Topologically, residues 952–974 (VSYKHQWFMKTFGRSKQQNTRTR) are cytoplasmic.

This sequence belongs to the RLP family.

The protein localises to the cell membrane. This chain is Receptor-like protein 7, found in Arabidopsis thaliana (Mouse-ear cress).